A 1765-amino-acid polypeptide reads, in one-letter code: Tight junction protein ZO-1 (1765 aa).

Residues 23–110 form the PDZ 1 domain; that stretch reads TVTLHRAPGF…NAKITIRRKK (88 aa). Basic residues predominate over residues 102-112; sequence AKITIRRKKKV. A disordered region spans residues 102 to 189; the sequence is AKITIRRKKK…QPAKPTKVTL (88 aa). Over residues 123-136 the composition is skewed to acidic residues; that stretch reads PVSDNEDDSYDEDV. Phosphoserine is present on S125. Y132 bears the Phosphotyrosine mark. Residues 149 to 175 show a composition bias toward basic and acidic residues; the sequence is RRGEKSWARDRSASRDRSLSPRSDRRS. Phosphoserine is present on residues S175, S178, and S179. T185 is modified (phosphothreonine). Residues 186-264 form the PDZ 2 domain; it reads KVTLVKSRKN…KLKMVVQRDE (79 aa). S212 and S241 each carry phosphoserine. At T267 the chain carries Phosphothreonine. A phosphoserine mark is found at S275, S277, S280, S284, S290, S294, S297, S300, S323, S329, S334, S337, and S353. The disordered stretch occupies residues 296 to 363; that stretch reads ASDHSVRSHD…TPVKHVDDHT (68 aa). Basic and acidic residues predominate over residues 299-308; sequence HSVRSHDRPP. Polar residues predominate over residues 325–338; it reads HSTQSPQQPSNGSL. At T354 the chain carries Phosphothreonine. The 82-residue stretch at 421–502 folds into the PDZ 3 domain; that stretch reads SMKLVKFRKG…GEEVTILAQK (82 aa). The SH3 domain occupies 516–584; it reads GDSFYIRTHF…PNKNRAEQLA (69 aa). S617 and S622 each carry phosphoserine. The segment at 633-876 is occludin (OCLN)-binding region; the sequence is YERVVLREAG…GTPPESAITR (244 aa). In terms of domain architecture, Guanylate kinase-like spans 690–791; that stretch reads RLHTIKQIID…WYGALKEAIQ (102 aa). Residue T809 is modified to Phosphothreonine. S810 and S821 each carry phosphoserine. At Y822 the chain carries Phosphotyrosine. S824, S828, and S837 each carry phosphoserine. Disordered regions lie at residues 825–941 and 1023–1042; these read APGS…PASS and ALGHPGQRLDKEPNPAYDPQ. Phosphothreonine occurs at positions 846, 848, 854, 861, and 868. Over residues 879–892 the composition is skewed to basic and acidic residues; sequence EPVREDSSGMHHEN. A compositionally biased stretch (low complexity) spans 893-906; the sequence is QTYPPYSPQAQPQA. S912 is subject to Phosphoserine. At S1071 the chain carries Phosphoserine. A disordered region spans residues 1092-1585; that stretch reads SYYDDKQPYP…SSTQPPEFDS (494 aa). The segment covering 1106–1124 has biased composition (basic and acidic residues); the sequence is DTQHPRDLDSRQHPEEASE. Phosphotyrosine is present on residues Y1139 and Y1164. The actin-binding region (ABR) stretch occupies residues 1150-1370; sequence RTSTLRHEEQ…FDRRSFESKP (221 aa). Basic and acidic residues-rich tracts occupy residues 1268-1285 and 1335-1346; these read KMFENKRSASLENKKDVN and PPEDIVRSNHYD. The residue at position 1353 (Y1353) is a Phosphotyrosine. S1365 carries the post-translational modification Phosphoserine. Positions 1388-1399 are enriched in low complexity; the sequence is SQSQPNFSSYSS. Residues 1401-1418 show a composition bias toward basic and acidic residues; it reads GKPETDAMDRSFSEKRYD. S1411 is subject to Phosphoserine. Polar residues-rich tracts occupy residues 1442–1468 and 1509–1519; these read NSSLHIHSKAAQSEGNSVSLDFQNSYI and GAEQTQKTITP. Residues 1535 to 1544 are compositionally biased toward basic and acidic residues; sequence PFERKFESPK. S1542 and S1614 each carry phosphoserine. Residues 1631–1765 enclose the ZU5 domain; the sequence is ATARGIFNSN…NCVSVLIDHF (135 aa).

It belongs to the MAGUK family. As to quaternary structure, homodimer. Forms heterodimers TJP3. Forms a heterodimer (via PDZ2 domain) with TJP2/ZO2 (via PDZ2 domain). Interacts with OCLN. Interacts with CALM, claudins, CGN/cingulin, CXADR, GJA12, GJD3 and UBN1. Interacts (via ZU5 domain) with CDC42BPB and MYZAP. Interacts (via PDZ domain) with GJA1. Interacts (via PDZ domains) with ANKRD2. Interacts with BVES (via the C-terminus cytoplasmic tail). Interacts with HSPA4. Interacts with KIRREL1. Interacts with DLL1. Interacts with USP53 (via the C-terminal region). Interacts with DNMBP (via C-terminal domain); required for the apical cell-cell junction localization of DNMBP. Interacts with SPEF1. Interacts (via N-terminus) with CTNNA1. Interacts with CLDN18. Interacts with CLDN16 (via TRV motif); this is a prerequisite for anchoring of CLDN16 at the tight junction. Interacts with PKP1; the interaction facilitates TJP1/ZO-1 localization to the plasma membrane. Phosphorylated at tyrosine redidues in response to epidermal growth factor (EGF). This response is dependent on an intact actin microfilament system. Dephosphorylated by Ptprj.

It is found in the cell membrane. It localises to the cell junction. Its subcellular location is the tight junction. The protein resides in the gap junction. TjpP1, Tjp2, and Tjp3 are closely related scaffolding proteins that link tight junction (TJ) transmembrane proteins such as claudins, junctional adhesion molecules, and occludin to the actin cytoskeleton. The tight junction acts to limit movement of substances through the paracellular space and as a boundary between the compositionally distinct apical and basolateral plasma membrane domains of epithelial and endothelial cells. Necessary for lumenogenesis, and particularly efficient epithelial polarization and barrier formation. Plays a role in the regulation of cell migration by targeting Cdc42bpb to the leading edge of migrating cells. Plays an important role in podosome formation and associated function, thus regulating cell adhesion and matrix remodeling. With Tjp2 and Tjp3, participates in the junctional retention and stability of the transcription factor Dbpa, but is not involved in its shuttling to the nucleus. May play a role in mediating cell morphology changes during ameloblast differentiation via its role in tight junctions. This Rattus norvegicus (Rat) protein is Tight junction protein ZO-1.